The chain runs to 93 residues: UPF0358 protein lwe1048 (93 aa).

This sequence belongs to the UPF0358 family.

The protein is UPF0358 protein lwe1048 of Listeria welshimeri serovar 6b (strain ATCC 35897 / DSM 20650 / CCUG 15529 / CIP 8149 / NCTC 11857 / SLCC 5334 / V8).